Consider the following 1377-residue polypeptide: Clustered mitochondria protein homolog (1377 aa).

Positions 1–61 (MLKSIQRNGK…GETKKKSDSE (61 aa)) are disordered. A Clu domain is found at 353–595 (RAEDTFSSKL…RTFPPDVNFL (243 aa)). The stretch at 519–552 (VYGSIDFGKTVLSHEKYLELLNNAGKHLKIYPHS) is one TPR 1 repeat. Disordered stretches follow at residues 651–700 (NKRQ…VPKV) and 886–917 (DVLT…KSSF). Residues 655–690 (QKQDTPKEETKAIEPAAKEDSANNNKEEPAAKKGEP) show a composition bias toward basic and acidic residues. A compositionally biased stretch (polar residues) spans 886-896 (DVLTKSGSSGK). TPR repeat units lie at residues 1022 to 1055 (AYNF…LNNV), 1148 to 1181 (ALLD…NIKY), and 1183 to 1216 (GEKS…EKET). The tract at residues 1310–1377 (KEGGAAGESS…SKANPVASSS (68 aa)) is disordered. Residues 1364-1377 (ASSSSKANPVASSS) are compositionally biased toward low complexity.

The protein belongs to the CLU family.

The protein resides in the cytoplasm. Functionally, mRNA-binding protein involved in proper cytoplasmic distribution of mitochondria. This Culex quinquefasciatus (Southern house mosquito) protein is Clustered mitochondria protein homolog.